A 253-amino-acid polypeptide reads, in one-letter code: 2,3-bisphosphoglycerate-dependent phosphoglycerate mutase (253 aa).

Substrate contacts are provided by residues 12 to 19, 25 to 26, Arg64, 91 to 94, Lys102, 118 to 119, and 187 to 188; these read RHGESEWN, TG, ERHY, RR, and GN. The active-site Tele-phosphohistidine intermediate is the His13. Glu91 serves as the catalytic Proton donor/acceptor.

Belongs to the phosphoglycerate mutase family. BPG-dependent PGAM subfamily.

The enzyme catalyses (2R)-2-phosphoglycerate = (2R)-3-phosphoglycerate. Its pathway is carbohydrate degradation; glycolysis; pyruvate from D-glyceraldehyde 3-phosphate: step 3/5. Its function is as follows. Catalyzes the interconversion of 2-phosphoglycerate and 3-phosphoglycerate. The polypeptide is 2,3-bisphosphoglycerate-dependent phosphoglycerate mutase (Streptomyces griseus subsp. griseus (strain JCM 4626 / CBS 651.72 / NBRC 13350 / KCC S-0626 / ISP 5235)).